Here is a 341-residue protein sequence, read N- to C-terminus: Spindolin (341 aa).

A signal peptide spans 1–20; that stretch reads MNKLILISLIASLYQVEVDA.

As to quaternary structure, homodimer; disulfide-linked.

Its function is as follows. This protein is a spindle body protein. In Choristoneura biennis entomopoxvirus (CbEPV), this protein is Spindolin (SPH).